The primary structure comprises 179 residues: Peptidyl-tRNA hydrolase (179 aa).

Tyr-15 provides a ligand contact to tRNA. His-20 (proton acceptor) is an active-site residue. TRNA-binding residues include Tyr-66, Asn-68, and Asn-114.

The protein belongs to the PTH family. In terms of assembly, monomer.

Its subcellular location is the cytoplasm. It carries out the reaction an N-acyl-L-alpha-aminoacyl-tRNA + H2O = an N-acyl-L-amino acid + a tRNA + H(+). Hydrolyzes ribosome-free peptidyl-tRNAs (with 1 or more amino acids incorporated), which drop off the ribosome during protein synthesis, or as a result of ribosome stalling. Functionally, catalyzes the release of premature peptidyl moieties from peptidyl-tRNA molecules trapped in stalled 50S ribosomal subunits, and thus maintains levels of free tRNAs and 50S ribosomes. The polypeptide is Peptidyl-tRNA hydrolase (Chlamydia trachomatis serovar L2 (strain ATCC VR-902B / DSM 19102 / 434/Bu)).